The sequence spans 589 residues: Zinc finger protein 131 (589 aa).

Residues 34–98 (TDITLIVDGH…TYTAKLMIQG (65 aa)) enclose the BTB domain. The short motif at 137-148 (TGKNEAKKRKIA) is the Nuclear localization signal 1 element. Over residues 224-234 (GDRKGQIKEDG) the composition is skewed to basic and acidic residues. Residues 224-247 (GDRKGQIKEDGCPSDPTSKQEHMK) are disordered. C2H2-type zinc fingers lie at residues 254 to 277 (FKCE…NCYH) and 294 to 316 (HVCQ…LRKH). Residues lysine 255 and lysine 261 each participate in a glycyl lysine isopeptide (Lys-Gly) (interchain with G-Cter in SUMO2) cross-link. A Nuclear localization signal 2 motif is present at residues 283–294 (VSKKQRTGKKIH). The segment at 322–347 (FECPNCHERFARNSTLKCHLTACQTG) adopts a C2H2-type 3; degenerate zinc-finger fold. C2H2-type zinc fingers lie at residues 358–380 (YECQ…LVIH) and 386–409 (NHCT…SDAH). The span at 539-583 (NQEERESSQADAAEAAREDHEDAEDLETKPTVDSEAEKAENEDRT) shows a compositional bias: basic and acidic residues. Positions 539–589 (NQEERESSQADAAEAAREDHEDAEDLETKPTVDSEAEKAENEDRTAMPVLE) are disordered. A Glycyl lysine isopeptide (Lys-Gly) (interchain with G-Cter in SUMO) cross-link involves residue lysine 567.

Belongs to the krueppel C2H2-type zinc-finger protein family. Monosumoylated at Lys-567 by CBX4 and UHRF2. Sumoylation may potentiate ZNF131 inhibition of estrogen signaling. Sumoylation does not interfere with ubiquitination. Post-translationally, ubiquitinated.

Its subcellular location is the nucleus. In terms of biological role, may be involved in transcriptional regulation as a repressor of ESR1/ER-alpha signaling. Plays a role during development and organogenesis as well as in the function of the adult central nervous system. The sequence is that of Zinc finger protein 131 (ZNF131) from Pongo abelii (Sumatran orangutan).